The following is a 185-amino-acid chain: Lipid A acyltransferase PagP (185 aa).

The N-terminal stretch at methionine 1 to alanine 24 is a signal peptide. Active-site residues include histidine 57, aspartate 100, and serine 101.

It belongs to the lipid A palmitoyltransferase family. In terms of assembly, homodimer.

It localises to the cell outer membrane. The catalysed reaction is a lipid A + a 1,2-diacyl-sn-glycero-3-phosphocholine = a hepta-acyl lipid A + a 2-acyl-sn-glycero-3-phosphocholine. It carries out the reaction a lipid IVA + a 1,2-diacyl-sn-glycero-3-phosphocholine = a lipid IVB + a 2-acyl-sn-glycero-3-phosphocholine. It catalyses the reaction a lipid IIA + a 1,2-diacyl-sn-glycero-3-phosphocholine = a lipid IIB + a 2-acyl-sn-glycero-3-phosphocholine. Transfers a fatty acid residue from the sn-1 position of a phospholipid to the N-linked hydroxyfatty acid chain on the proximal unit of lipid A or its precursors. This chain is Lipid A acyltransferase PagP, found in Edwardsiella tarda (strain FL6-60).